The primary structure comprises 132 residues: Glycine cleavage system H protein (132 aa).

The Lipoyl-binding domain maps to 24–106; it reads TVRVGLTDFA…YGAGWLLDVH (83 aa). The residue at position 65 (K65) is an N6-lipoyllysine.

This sequence belongs to the GcvH family. In terms of assembly, the glycine cleavage system is composed of four proteins: P, T, L and H. The cofactor is (R)-lipoate.

Its function is as follows. The glycine cleavage system catalyzes the degradation of glycine. The H protein shuttles the methylamine group of glycine from the P protein to the T protein. In Mycobacterium leprae (strain Br4923), this protein is Glycine cleavage system H protein.